Here is a 23-residue protein sequence, read N- to C-terminus: SV40 early leader protein (23 aa).

Positions 1-23 (MQRPRPPRPLSYSRSSEEAFLEA) are disordered.

The protein belongs to the polyomavirus early leader protein family.

Its function is as follows. May play a role in the lytic cycle. The protein is SV40 early leader protein of Macaca (macaques).